The primary structure comprises 251 residues: Ubiquinone/menaquinone biosynthesis C-methyltransferase UbiE (251 aa).

S-adenosyl-L-methionine is bound by residues Thr74, Asp95, and 123–124; that span reads NA.

This sequence belongs to the class I-like SAM-binding methyltransferase superfamily. MenG/UbiE family.

The enzyme catalyses a 2-demethylmenaquinol + S-adenosyl-L-methionine = a menaquinol + S-adenosyl-L-homocysteine + H(+). It carries out the reaction a 2-methoxy-6-(all-trans-polyprenyl)benzene-1,4-diol + S-adenosyl-L-methionine = a 5-methoxy-2-methyl-3-(all-trans-polyprenyl)benzene-1,4-diol + S-adenosyl-L-homocysteine + H(+). Its pathway is quinol/quinone metabolism; menaquinone biosynthesis; menaquinol from 1,4-dihydroxy-2-naphthoate: step 2/2. The protein operates within cofactor biosynthesis; ubiquinone biosynthesis. Methyltransferase required for the conversion of demethylmenaquinol (DMKH2) to menaquinol (MKH2) and the conversion of 2-polyprenyl-6-methoxy-1,4-benzoquinol (DDMQH2) to 2-polyprenyl-3-methyl-6-methoxy-1,4-benzoquinol (DMQH2). The protein is Ubiquinone/menaquinone biosynthesis C-methyltransferase UbiE of Shewanella piezotolerans (strain WP3 / JCM 13877).